Reading from the N-terminus, the 223-residue chain is MSQNSESIRMVLIGPPGAGKGTQAPNLVKQFGAAHLSTGDMLRSQVAKGTPLGVEAKKIMDQGGLVSDEIMVGMIKQELETNPACGKGFILDGFPRTIPQAEKLDQMLAERGTPLEKAVELKVDDELLVARITGRLVHPSSGRSYHKLFNPPKVEMTDDVTGEPLVQRSDDNAEALMKRLNSYHQQTEPIVEFYKKTGIWAGVDASQAPDNVWTSILKVLGKN.

Residue 17–22 (GAGKGT) participates in ATP binding. Residues 37-66 (STGDMLRSQVAKGTPLGVEAKKIMDQGGLV) are NMP. AMP is bound by residues Thr38, Arg43, 64–66 (GLV), 93–96 (GFPR), and Gln100. The interval 134 to 171 (GRLVHPSSGRSYHKLFNPPKVEMTDDVTGEPLVQRSDD) is LID. Residues Arg135 and 144–145 (SY) each bind ATP. Residues Arg168 and Arg179 each coordinate AMP. Gln207 is an ATP binding site.

This sequence belongs to the adenylate kinase family. AK2 subfamily. As to quaternary structure, monomer.

The protein localises to the cytoplasm. It is found in the cytosol. It localises to the mitochondrion intermembrane space. It catalyses the reaction AMP + ATP = 2 ADP. Functionally, catalyzes the reversible transfer of the terminal phosphate group between ATP and AMP. Plays an important role in cellular energy homeostasis and in adenine nucleotide metabolism. Adenylate kinase activity is critical for regulation of the phosphate utilization and the AMP de novo biosynthesis pathways. The chain is Adenylate kinase from Vanderwaltozyma polyspora (strain ATCC 22028 / DSM 70294 / BCRC 21397 / CBS 2163 / NBRC 10782 / NRRL Y-8283 / UCD 57-17) (Kluyveromyces polysporus).